The primary structure comprises 91 residues: Large ribosomal subunit protein eL31 (91 aa).

Belongs to the eukaryotic ribosomal protein eL31 family.

In Pyrobaculum calidifontis (strain DSM 21063 / JCM 11548 / VA1), this protein is Large ribosomal subunit protein eL31.